The following is a 280-amino-acid chain: DNA repair protein XRCC2 (280 aa).

At S10 the chain carries Phosphoserine.

This sequence belongs to the RecA family. RAD51 subfamily. Interacts with RAD51D. Part of the BCDX2 complex consisting of RAD51B, RAD51C, RAD51D and XRCC2; the complex has a ring-like structure arranged into a flat disk around a central channel. In the absence of DNA, the BCDX2 subcomplex XRCC2:RAD51D formed a multimeric ring structure; in the presence of single-stranded DNA it formed a filamentous structure with the ssDNA.

The protein resides in the nucleus. The protein localises to the cytoplasm. It localises to the cytoskeleton. It is found in the microtubule organizing center. Its subcellular location is the centrosome. Its function is as follows. Involved in the homologous recombination repair (HRR) pathway of double-stranded DNA, thought to repair chromosomal fragmentation, translocations and deletions. Part of the RAD51 paralog protein complex BCDX2 which acts in the BRCA1-BRCA2-dependent HR pathway. Upon DNA damage, BCDX2 acts downstream of BRCA2 recruitment and upstream of RAD51 recruitment. BCDX2 binds predominantly to the intersection of the four duplex arms of the Holliday junction and to junction of replication forks. The BCDX2 complex was originally reported to bind single-stranded DNA, single-stranded gaps in duplex DNA and specifically to nicks in duplex DNA. This is DNA repair protein XRCC2 (XRCC2) from Homo sapiens (Human).